A 159-amino-acid chain; its full sequence is Protein hunchback (159 aa).

Residues H18 to R34 show a composition bias toward basic residues. Disordered stretches follow at residues H18–L49 and L119–A159. Basic and acidic residues predominate over residues E140 to A159.

The protein belongs to the hunchback C2H2-type zinc-finger protein family.

The protein localises to the nucleus. Functionally, gap class segmentation protein that controls development of head structures. The sequence is that of Protein hunchback (hb) from Drosophila soonae (Fruit fly).